Consider the following 220-residue polypeptide: Thiopurine S-methyltransferase (220 aa).

Residues tryptophan 10, leucine 45, glutamate 66, and arginine 123 each coordinate S-adenosyl-L-methionine.

It belongs to the class I-like SAM-binding methyltransferase superfamily. TPMT family.

The protein localises to the cytoplasm. It carries out the reaction S-adenosyl-L-methionine + a thiopurine = S-adenosyl-L-homocysteine + a thiopurine S-methylether.. This Nitrosospira multiformis (strain ATCC 25196 / NCIMB 11849 / C 71) protein is Thiopurine S-methyltransferase.